We begin with the raw amino-acid sequence, 413 residues long: uncharacterized protein (413 aa).

The helical transmembrane segment at 14 to 34 (LLFFTVVIIPIFYYIYKIVYL) threads the bilayer. N46, N55, N103, N171, N179, N184, N220, N252, N260, N273, N362, N366, N374, N378, N393, and N408 each carry an N-linked (GlcNAc...) asparagine; by host glycan. Over residues 250–263 (TKNSTETNSDNNSE) the composition is skewed to low complexity. The interval 250–277 (TKNSTETNSDNNSEIVSETNSETNYSTP) is disordered. A compositionally biased stretch (polar residues) spans 264 to 277 (IVSETNSETNYSTP).

Its subcellular location is the membrane. This is an uncharacterized protein from Acanthamoeba polyphaga (Amoeba).